Reading from the N-terminus, the 73-residue chain is Heterin-2 (73 aa).

The first 22 residues, 1–22 (MQYKTFLVIFLAYLLVTEEALA), serve as a signal peptide directing secretion. The propeptide occupies 47–73 (KRALKNIFDPYQKNLDLELERLLSQLQ).

The protein belongs to the non-disulfide-bridged peptide (NDBP) superfamily. Medium-length antimicrobial peptide (group 3) family. As to expression, expressed by the venom gland.

It localises to the secreted. It is found in the target cell membrane. In terms of biological role, amphipathic peptide with potent activities against Gram-positive bacteria (MIC=5.6-30.0 uM) and weaker activities against the tested Gram-negative bacteria (MIC=15 uM to &gt;45 uM). It has high hemolytic activity against human erythrocytes. May act by disrupting the integrity of the bacterial cell membrane. This chain is Heterin-2, found in Heterometrus spinifer (Asia giant forest scorpion).